Here is a 1026-residue protein sequence, read N- to C-terminus: uncharacterized protein (1026 aa).

4 WD repeats span residues 14-53, 62-104, 148-187, and 937-977; these read LLDE…HFTL, HSVS…RRAT, GHED…LTFK, and NAEC…VKFL.

The protein localises to the cytoplasm. Its subcellular location is the nucleus. This is an uncharacterized protein from Schizosaccharomyces pombe (strain 972 / ATCC 24843) (Fission yeast).